We begin with the raw amino-acid sequence, 363 residues long: 3-methyl-D-ornithine--L-lysine ligase (363 aa).

Position 10 (Lys-10) interacts with ATP. L-lysine is bound at residue 11-12 (LQ). ATP-binding positions include Asp-31, 49-50 (DV), and 72-73 (EN). Glu-72 contributes to the L-lysine binding site. The ATP-grasp domain maps to 85–269 (EEFSCPVLFD…LIELLFRAFG (185 aa)). Residues Lys-104, Lys-131, Ser-138, and 160–163 (EEYV) contribute to the ADP site. D-ornithine contacts are provided by residues 169 to 171 (SLE) and Asp-225. Mg(2+)-binding residues include Glu-227, Glu-239, and Asp-241. Residue Glu-239 coordinates ADP. D-ornithine is bound by residues 243–248 (RFPSQT) and Glu-302. L-lysine contacts are provided by Ser-246 and Glu-302.

It belongs to the PylC family. Mg(2+) serves as cofactor.

It carries out the reaction (3R)-3-methyl-D-ornithine + L-lysine + ATP = (3R)-3-methyl-D-ornithyl-N(6)-L-lysine + ADP + phosphate + H(+). The protein operates within amino-acid biosynthesis; L-pyrrolysine biosynthesis. In terms of biological role, is required for the biosynthesis of pyrrolysine. Catalyzes the ATP-dependent ligation between (3R)-3-methyl-D-ornithine and L-lysine, leading to (3R)-3-methyl-D-ornithyl-N6-L-lysine. The protein is 3-methyl-D-ornithine--L-lysine ligase of Methanosarcina acetivorans (strain ATCC 35395 / DSM 2834 / JCM 12185 / C2A).